A 417-amino-acid polypeptide reads, in one-letter code: Serine hydroxymethyltransferase 1 (417 aa).

(6S)-5,6,7,8-tetrahydrofolate contacts are provided by residues leucine 121 and 125–127 (GHL). At lysine 229 the chain carries N6-(pyridoxal phosphate)lysine. (6S)-5,6,7,8-tetrahydrofolate is bound at residue 354–356 (SPF).

The protein belongs to the SHMT family. Homodimer. Requires pyridoxal 5'-phosphate as cofactor.

Its subcellular location is the cytoplasm. The enzyme catalyses (6R)-5,10-methylene-5,6,7,8-tetrahydrofolate + glycine + H2O = (6S)-5,6,7,8-tetrahydrofolate + L-serine. It participates in one-carbon metabolism; tetrahydrofolate interconversion. It functions in the pathway amino-acid biosynthesis; glycine biosynthesis; glycine from L-serine: step 1/1. Catalyzes the reversible interconversion of serine and glycine with tetrahydrofolate (THF) serving as the one-carbon carrier. This reaction serves as the major source of one-carbon groups required for the biosynthesis of purines, thymidylate, methionine, and other important biomolecules. Also exhibits THF-independent aldolase activity toward beta-hydroxyamino acids, producing glycine and aldehydes, via a retro-aldol mechanism. This chain is Serine hydroxymethyltransferase 1, found in Pseudomonas savastanoi pv. phaseolicola (strain 1448A / Race 6) (Pseudomonas syringae pv. phaseolicola (strain 1448A / Race 6)).